The chain runs to 561 residues: Cytosolic purine 5'-nucleotidase (561 aa).

The active-site Nucleophile is aspartate 52. GMP contacts are provided by aspartate 52 and aspartate 54. Aspartate 52 and aspartate 54 together coordinate IMP. Residues aspartate 52 and aspartate 54 each coordinate Mg(2+). Aspartate 54 serves as the catalytic Proton donor. Residue arginine 144 participates in (2R)-2,3-bisphosphoglycerate binding. The ATP site is built by arginine 144 and asparagine 154. Positions 144 and 154 each coordinate dATP. Asparagine 154 is an adenosine binding site. Asparagine 154 is a binding site for P(1),P(4)-bis(5'-adenosyl) tetraphosphate. Residues arginine 202, aspartate 206, lysine 215, threonine 249, and asparagine 250 each coordinate GMP. IMP-binding residues include arginine 202, aspartate 206, lysine 215, threonine 249, asparagine 250, serine 251, and lysine 292. Lysine 292 is a GMP binding site. Aspartate 351 contacts Mg(2+). Residue lysine 362 coordinates (2R)-2,3-bisphosphoglycerate. Residue lysine 362 participates in P(1),P(4)-bis(5'-adenosyl) tetraphosphate binding. Position 418 is a phosphoserine (serine 418). Adenosine is bound by residues methionine 436 and glutamine 453. ATP is bound by residues glutamine 453 and arginine 456. DATP contacts are provided by glutamine 453 and arginine 456. A P(1),P(4)-bis(5'-adenosyl) tetraphosphate-binding site is contributed by glutamine 453. Tyrosine 457 provides a ligand contact to (2R)-2,3-bisphosphoglycerate. Tyrosine 457 contacts P(1),P(4)-bis(5'-adenosyl) tetraphosphate. Residues serine 502, serine 511, and serine 527 each carry the phosphoserine modification. Residues 538–561 are disordered; that stretch reads PLAPQEITHCHDEDDDEEEEEEEE. Residues 548–561 are required for tetramer assembly; sequence HDEDDDEEEEEEEE. Residues 550 to 561 are compositionally biased toward acidic residues; it reads EDDDEEEEEEEE.

It belongs to the 5'(3')-deoxyribonucleotidase family. In terms of assembly, homotetramer. It depends on Mg(2+) as a cofactor. In terms of tissue distribution, widely expressed.

The protein resides in the cytoplasm. It localises to the cytosol. The enzyme catalyses a ribonucleoside 5'-phosphate + H2O = a ribonucleoside + phosphate. It catalyses the reaction a 2'-deoxyribonucleoside + a ribonucleoside 5'-phosphate = a ribonucleoside + a 2'-deoxyribonucleoside 5'-phosphate. It carries out the reaction IMP + H2O = inosine + phosphate. The catalysed reaction is GMP + H2O = guanosine + phosphate. The enzyme catalyses dIMP + H2O = 2'-deoxyinosine + phosphate. It catalyses the reaction dGMP + H2O = 2'-deoxyguanosine + phosphate. It carries out the reaction XMP + H2O = xanthosine + phosphate. The catalysed reaction is inosine + GMP = guanosine + IMP. The enzyme catalyses dGMP + inosine = 2'-deoxyguanosine + IMP. It catalyses the reaction dIMP + inosine = 2'-deoxyinosine + IMP. It carries out the reaction inosine + UMP = uridine + IMP. The catalysed reaction is inosine + CMP = cytidine + IMP. The enzyme catalyses inosine + AMP = IMP + adenosine. Allosterically activated by various compounds including ATP, 2,3-BPG/2,3-Bisphosphoglyceric acid and Ap4A/P1,P4-bis(5'-adenosyl) tetraphosphate. Binding of an allosteric activator is a prerequisiste to magnesium and substrate binding. Inhibited by inorganic phosphate. In terms of biological role, broad specificity cytosolic 5'-nucleotidase that catalyzes the dephosphorylation of 6-hydroxypurine nucleoside 5'-monophosphates. In addition, possesses a phosphotransferase activity by which it can transfer a phosphate from a donor nucleoside monophosphate to an acceptor nucleoside, preferably inosine, deoxyinosine and guanosine. Has the highest activities for IMP and GMP followed by dIMP, dGMP and XMP. Could also catalyze the transfer of phosphates from pyrimidine monophosphates but with lower efficiency. Through these activities regulates the purine nucleoside/nucleotide pools within the cell. This is Cytosolic purine 5'-nucleotidase from Homo sapiens (Human).